Consider the following 324-residue polypeptide: Rho crystallin (324 aa).

Residue T2 is modified to N-acetylthreonine. 218–281 is a binding site for NADP(+); the sequence is SVLGSHRDRN…SFTPARIKQN (64 aa).

Belongs to the aldo/keto reductase family. In terms of assembly, monomer.

The protein is Rho crystallin of Aquarana catesbeiana (American bullfrog).